The sequence spans 96 residues: Transcriptional regulator ATRY (96 aa).

The GATA-type; atypical zinc finger occupies 1-12 (VICTACGQQVNQ). Residues 1 to 96 (VICTACGQQV…IAVCDSVLEN (96 aa)) form the ADD domain. The PHD-type; atypical zinc finger occupies 27 to 82 (LICKRWCAEGGNLICCDSCHNAFCKKCIWRNLGRKEISKIMNEKNEWHCYICCPEP).

The protein belongs to the SNF2/RAD54 helicase family. In terms of tissue distribution, expressed in developing and adult testis. Also weakly expressed in prostate and epididymis.

It is found in the nucleus. It catalyses the reaction ATP + H2O = ADP + phosphate + H(+). In terms of biological role, could be a global transcriptional regulator. Modifies gene expression by affecting chromatin. The polypeptide is Transcriptional regulator ATRY (ATRY) (Notamacropus eugenii (Tammar wallaby)).